A 375-amino-acid chain; its full sequence is Succinyl-diaminopimelate desuccinylase (375 aa).

Residue histidine 66 participates in Zn(2+) binding. Residue aspartate 68 is part of the active site. Residue aspartate 99 coordinates Zn(2+). The Proton acceptor role is filled by glutamate 133. Glutamate 134, glutamate 162, and histidine 348 together coordinate Zn(2+).

This sequence belongs to the peptidase M20A family. DapE subfamily. In terms of assembly, homodimer. It depends on Zn(2+) as a cofactor. Co(2+) is required as a cofactor.

It carries out the reaction N-succinyl-(2S,6S)-2,6-diaminopimelate + H2O = (2S,6S)-2,6-diaminopimelate + succinate. Its pathway is amino-acid biosynthesis; L-lysine biosynthesis via DAP pathway; LL-2,6-diaminopimelate from (S)-tetrahydrodipicolinate (succinylase route): step 3/3. In terms of biological role, catalyzes the hydrolysis of N-succinyl-L,L-diaminopimelic acid (SDAP), forming succinate and LL-2,6-diaminopimelate (DAP), an intermediate involved in the bacterial biosynthesis of lysine and meso-diaminopimelic acid, an essential component of bacterial cell walls. The polypeptide is Succinyl-diaminopimelate desuccinylase (Escherichia coli O17:K52:H18 (strain UMN026 / ExPEC)).